Here is a 293-residue protein sequence, read N- to C-terminus: Phosphatidylglycerol--prolipoprotein diacylglyceryl transferase (293 aa).

4 helical membrane passes run 45 to 65 (FELRWYSTLILMGFLISYFVA), 81 to 101 (ELIFYGVIAGIVGARLYYVLF), 115 to 135 (IWEGGLAIHGAVIGALLTGFL), and 144 to 164 (FTFLQATDLFTSVLPLGQAIG). Residue arginine 165 participates in a 1,2-diacyl-sn-glycero-3-phospho-(1'-sn-glycerol) binding. 3 consecutive transmembrane segments (helical) span residues 204 to 224 (PTFLYESIWDLLVFFMLSVYF), 231 to 249 (HGEVTCLYFVLYSLGRIVI), and 262 to 282 (IKAAQLLSAVLILLGFTGFLI).

The protein belongs to the Lgt family.

The protein resides in the cell inner membrane. The catalysed reaction is L-cysteinyl-[prolipoprotein] + a 1,2-diacyl-sn-glycero-3-phospho-(1'-sn-glycerol) = an S-1,2-diacyl-sn-glyceryl-L-cysteinyl-[prolipoprotein] + sn-glycerol 1-phosphate + H(+). It participates in protein modification; lipoprotein biosynthesis (diacylglyceryl transfer). Its function is as follows. Catalyzes the transfer of the diacylglyceryl group from phosphatidylglycerol to the sulfhydryl group of the N-terminal cysteine of a prolipoprotein, the first step in the formation of mature lipoproteins. In Thermotoga maritima (strain ATCC 43589 / DSM 3109 / JCM 10099 / NBRC 100826 / MSB8), this protein is Phosphatidylglycerol--prolipoprotein diacylglyceryl transferase.